A 408-amino-acid polypeptide reads, in one-letter code: Neutral cholesterol ester hydrolase 1 (408 aa).

The Cytoplasmic segment spans residues 1-4 (MRSS). A helical; Signal-anchor for type II membrane protein membrane pass occupies residues 5-25 (CVLLTALLALAAYYIYIPLPS). Residues 26 to 408 (SVSDPWKLML…SYIKWLDQNL (383 aa)) are Lumenal-facing. The Involved in the stabilization of the negatively charged intermediate by the formation of the oxyanion hole signature appears at 113–115 (HGG). The active site involves Ser-191. N-linked (GlcNAc...) asparagine glycosylation is found at Asn-270 and Asn-287. Residues Asp-348 and His-378 contribute to the active site. A glycan (N-linked (GlcNAc...) asparagine) is linked at Asn-389.

Belongs to the 'GDXG' lipolytic enzyme family. N-glycosylated.

It is found in the cell membrane. Its subcellular location is the microsome. It catalyses the reaction a 1-O-alkyl-2-acetyl-sn-glycerol + H2O = a 1-O-alkyl-sn-glycerol + acetate + H(+). The catalysed reaction is 1-O-hexadecyl-2-acetyl-sn-glycerol + H2O = 1-O-hexadecyl-sn-glycerol + acetate + H(+). The enzyme catalyses a cholesterol ester + H2O = cholesterol + a fatty acid + H(+). It carries out the reaction cholesteryl (9Z-octadecenoate) + H2O = cholesterol + (9Z)-octadecenoate + H(+). In terms of biological role, hydrolyzes 2-acetyl monoalkylglycerol ether (1-O-alkyl-2-acetyl-sn-glycerol), the penultimate precursor of the pathway for de novo synthesis of platelet-activating factor. May be responsible for the hydrolysis of cholesterol esters (such as cholesteryl (9Z-octadecenoate)) in macrophages. Also involved in organ detoxification by hydrolyzing exogenous organophosphorus compounds. The protein is Neutral cholesterol ester hydrolase 1 (NCEH1) of Bos taurus (Bovine).